Consider the following 322-residue polypeptide: Thioredoxin reductase (322 aa).

FAD is bound by residues 12–15 (SGPA), 34–42 (EGAVTAGGA), Asn-51, and Val-84. The cysteines at positions 136 and 139 are disulfide-linked. Positions 176, 182, 239, and 259 each coordinate NADP(+). Residues Asp-279 and 286–289 (RQAI) contribute to the FAD site. Arg-286 lines the NADP(+) pocket.

This sequence belongs to the class-II pyridine nucleotide-disulfide oxidoreductase family. In terms of assembly, homodimer. The cofactor is FAD.

It is found in the cytoplasm. It catalyses the reaction [thioredoxin]-dithiol + NADP(+) = [thioredoxin]-disulfide + NADPH + H(+). In Streptomyces coelicolor (strain ATCC BAA-471 / A3(2) / M145), this protein is Thioredoxin reductase.